Consider the following 176-residue polypeptide: NAD(P)H-quinone oxidoreductase subunit J (176 aa).

2 stretches are compositionally biased toward polar residues: residues 1-12 and 20-30; these read MEKDSQATSSDT and ISQSLSKDGIP. Residues 1–30 are disordered; that stretch reads MEKDSQATSSDTSIEKEGVISQSLSKDGIP.

Belongs to the complex I 30 kDa subunit family. In terms of assembly, NDH-1 can be composed of about 15 different subunits; different subcomplexes with different compositions have been identified which probably have different functions.

Its subcellular location is the cellular thylakoid membrane. The enzyme catalyses a plastoquinone + NADH + (n+1) H(+)(in) = a plastoquinol + NAD(+) + n H(+)(out). The catalysed reaction is a plastoquinone + NADPH + (n+1) H(+)(in) = a plastoquinol + NADP(+) + n H(+)(out). In terms of biological role, NDH-1 shuttles electrons from an unknown electron donor, via FMN and iron-sulfur (Fe-S) centers, to quinones in the respiratory and/or the photosynthetic chain. The immediate electron acceptor for the enzyme in this species is believed to be plastoquinone. Couples the redox reaction to proton translocation, and thus conserves the redox energy in a proton gradient. Cyanobacterial NDH-1 also plays a role in inorganic carbon-concentration. This chain is NAD(P)H-quinone oxidoreductase subunit J, found in Prochlorococcus marinus (strain AS9601).